Here is a 335-residue protein sequence, read N- to C-terminus: Ferrochelatase (335 aa).

Residues H207 and E288 each contribute to the Fe cation site.

This sequence belongs to the ferrochelatase family.

The protein localises to the cytoplasm. It carries out the reaction heme b + 2 H(+) = protoporphyrin IX + Fe(2+). It functions in the pathway porphyrin-containing compound metabolism; protoheme biosynthesis; protoheme from protoporphyrin-IX: step 1/1. Its function is as follows. Catalyzes the ferrous insertion into protoporphyrin IX. The chain is Ferrochelatase from Helicobacter pylori (strain HPAG1).